Here is a 432-residue protein sequence, read N- to C-terminus: Ectonucleoside triphosphate diphosphohydrolase 5 (432 aa).

Residues 1 to 24 (MALYQGAAFFMLVASCVCSTVFHR) form the signal peptide. The Proton acceptor role is filled by Glu-175. An N-linked (GlcNAc...) asparagine glycan is attached at Asn-235. 2 disulfide bridges follow: Cys-275–Cys-307 and Cys-367–Cys-381. N-linked (GlcNAc...) asparagine glycosylation is present at Asn-372.

The protein belongs to the GDA1/CD39 NTPase family. Monomer; active form. Homodimer; disulfide-linked. Homodimers are enzymatically inactive. The cofactor is Ca(2+). It depends on Mg(2+) as a cofactor. N-glycosylated; high-mannose type.

It is found in the endoplasmic reticulum. It localises to the secreted. The catalysed reaction is a ribonucleoside 5'-diphosphate + H2O = a ribonucleoside 5'-phosphate + phosphate + H(+). It catalyses the reaction GDP + H2O = GMP + phosphate + H(+). The enzyme catalyses UDP + H2O = UMP + phosphate + H(+). It carries out the reaction IDP + H2O = IMP + phosphate + H(+). The catalysed reaction is CDP + H2O = CMP + phosphate + H(+). It catalyses the reaction ADP + H2O = AMP + phosphate + H(+). The protein operates within protein modification; protein glycosylation. In terms of biological role, hydrolyzes nucleoside diphosphates with a preference for GDP, IDP and UDP compared to ADP and CDP. In the lumen of the endoplasmic reticulum, hydrolyzes UDP that acts as an end-product feedback inhibitor of the UDP-Glc:glycoprotein glucosyltransferases. UMP can be transported back by an UDP-sugar antiporter to the cytosol where it is consumed to regenerate UDP-glucose. Therefore, it positively regulates protein reglucosylation by clearing UDP from the ER lumen and by promoting the regeneration of UDP-glucose. Protein reglucosylation is essential to proper glycoprotein folding and quality control in the ER. This chain is Ectonucleoside triphosphate diphosphohydrolase 5 (ENTPD5), found in Bos taurus (Bovine).